The primary structure comprises 264 residues: Tropinone reductase homolog At5g06060 (264 aa).

Leu-15–His-39 is a binding site for NADP(+). Residue Ser-148 coordinates substrate. Residue Tyr-161 is the Proton acceptor of the active site.

This sequence belongs to the short-chain dehydrogenases/reductases (SDR) family. SDR65C subfamily.

This Arabidopsis thaliana (Mouse-ear cress) protein is Tropinone reductase homolog At5g06060.